The primary structure comprises 174 residues: Suppressor of RNA silencing (174 aa).

The stretch at 86 to 116 (HAQLRSLNAELDTLEAREESLRAQIKALSAG) forms a coiled coil.

Belongs to the virgaviridae suppressor of RNA silencing family.

Its function is as follows. Suppressor of RNA-mediated gene silencing, also known as post-transcriptional gene silencing (PTGS), a mechanism of plant viral defense that performs sequence-specific inhibition of viral mRNAs expression. This chain is Suppressor of RNA silencing, found in Soil-borne wheat mosaic virus (strain United States/Nebraska/1981) (SBWMV).